A 420-amino-acid chain; its full sequence is Xyloglucan O-acetyltransferase 4 (420 aa).

Topologically, residues methionine 1–arginine 30 are cytoplasmic. Residues proline 31–leucine 51 form a helical; Signal-anchor for type II membrane protein membrane-spanning segment. The Lumenal segment spans residues asparagine 52–aspartate 420. Cystine bridges form between cysteine 78–cysteine 128, cysteine 99–cysteine 164, cysteine 108–cysteine 400, and cysteine 323–cysteine 396. Asparagine 96 carries an N-linked (GlcNAc...) asparagine glycan. Positions glycine 151 to serine 153 match the GDS motif motif. Serine 153 functions as the Nucleophile in the catalytic mechanism. 4 N-linked (GlcNAc...) asparagine glycosylation sites follow: asparagine 192, asparagine 212, asparagine 270, and asparagine 324. The active-site Proton donor is aspartate 395. Residues aspartate 395–histidine 398 carry the DXXH motif motif. Catalysis depends on histidine 398, which acts as the Proton acceptor.

It belongs to the PC-esterase family. TBL subfamily.

It localises to the golgi apparatus membrane. In terms of biological role, xyloglucan acetyltransferase that catalyzes the acetylation of fucosylated Gal residues on xyloglucan side chains. Predominantly catalyze 6-O-monoacetylation of Gal residues in the Fuc-Gal-Xyl trisaccharide side chains of xyloglucan oligomers. In Populus trichocarpa (Western balsam poplar), this protein is Xyloglucan O-acetyltransferase 4.